Here is a 462-residue protein sequence, read N- to C-terminus: Microspherule protein 1 (462 aa).

Position 1 is an N-acetylmethionine (Met-1). Residues 1 to 130 (MDKDSQGLLD…KSKQPLQVTK (130 aa)) are disordered. At Ser-22 the chain carries Phosphoserine. Residues 43–55 (PKRRSSSRFIKRK) show a composition bias toward basic residues. Residue Ser-102 is modified to Phosphoserine. At Thr-103 the chain carries Phosphothreonine. Over residues 103 to 112 (TPVPPSPAPA) the composition is skewed to pro residues. Ser-108 bears the Phosphoserine mark. The Nuclear localization signal motif lies at 113–123 (PGLTKRVKKSK). 2 positions are modified to N6-acetyllysine: Lys-123 and Lys-130. Phosphoserine is present on Ser-282. A coiled-coil region spans residues 301–335 (LEHELMVADRRQKREIRQLEQELHKWQVLVDSITG). Residues 363 to 419 (ITLGRATKDNQIDVDLSLEGPAWKISRKQGVIKLKNNGDFFIANEGRRPIYIDGRPV) enclose the FHA domain. The short motif at 389 to 396 (RKQGVIKL) is the UBR5-degron element.

As to quaternary structure, component of the chromatin remodeling INO80 complex; specifically part of a complex module associated with the N-terminus of INO80. Component of some MLL1/MLL complex, at least composed of the core components KMT2A/MLL1, ASH2L, HCFC1, WDR5 and RBBP5, as well as the facultative components BACC1, CHD8, E2F6, HSP70, INO80C, KANSL1, LAS1L, MAX, MCRS1, MGA, KAT8/MOF, PELP1, PHF20, PRP31, RING2, RUVB1/TIP49A, RUVB2/TIP49B, SENP3, TAF1, TAF4, TAF6, TAF7, TAF9 and TEX10. Component of the NSL complex at least composed of MOF/KAT8, KANSL1, KANSL2, KANSL3, MCRS1, PHF20, OGT1/OGT, WDR5 and HCFC1. Interacts with NOP2. Interacts with PINX1. Interacts with TERT. Interacts with CCDC85B. Interacts with DAXX. Interacts (via N-terminus) with FMR1 (via phosphorylated form). Interacts with FXR1 and FXR2. Interacts (via C-terminus) with NDE1 (via C-terminus); phosphorylation of NDE1 inhibits the interaction. Interacts (via C-terminus) with ZNF375. Interacts (via C-terminus) with active GTP-bound RHEB (via N-terminus) under conditions of high amino acid concentration; the interaction promotes mTORC1 complex activation by RHEB. Interacts (via N-terminus) with the mTORC1 complex; the interaction ensures mTORC1 activation by RHEB. Interacts with DYNC1I1; the interaction is required for the proper distribution of centriolar satellites. Interacts with TTBK2; the interaction is required for recruitment of TTBK2 to the mother centriole. Interacts with KIF2A; the interaction occurs during mitosis and facilitates chromosome alignment. (Microbial infection) Interacts with Herpes simplex virus ICP22. In terms of processing, ubiquitinated by UBR5 when not assembled in the INO80 complex, leading to its degradation: UBR5 recognizes and binds a degron that is not accessible when MCRS1 is part of the INO80 complex. Phosphorylated by AURKA on Ser-35 and/or Ser-36 during mitosis which is required for kinetochore fiber assembly and mitotic progression but not for spindle localization or for chromosome-induced microtuble aster formation. Also phosphorylated by AURKA on Ser-85 and/or Ser-87. Phosphorylated by TTK/MPS1 which enhances recruitment of KIF2A to the minus end of spindle microtubules and facilitates precise chromosome segregation. Detected in testis, and at lower levels in spleen, thymus, prostate, uterus, small intestine, colon and leukocytes.

Its subcellular location is the nucleus. It localises to the nucleolus. The protein resides in the cytoplasm. It is found in the cytoskeleton. The protein localises to the microtubule organizing center. Its subcellular location is the centrosome. It localises to the spindle pole. The protein resides in the chromosome. It is found in the centromere. The protein localises to the kinetochore. Its subcellular location is the lysosome. It localises to the centriolar satellite. Its function is as follows. Modulates the transcription repressor activity of DAXX by recruiting it to the nucleolus. As part of the NSL complex, may be involved in acetylation of nucleosomal histone H4 on several lysine residues. Putative regulatory component of the chromatin remodeling INO80 complex which is involved in transcriptional regulation, DNA replication and probably DNA repair. May also be an inhibitor of TERT telomerase activity. Binds to G-quadruplex structures in mRNA. Binds to RNA homomer poly(G) and poly(U). Maintains RHEB at the lysosome in its active GTP-bound form and prevents its interaction with the mTORC1 complex inhibitor TSC2, ensuring activation of the mTORC1 complex by RHEB. Stabilizes the minus ends of kinetochore fibers by protecting them from depolymerization, ensuring functional spindle assembly during mitosis. Following phosphorylation by TTK/MPS1, enhances recruitment of KIF2A to the minus ends of mitotic spindle microtubules which promotes chromosome alignment. Regulates the morphology of microtubule minus ends in mitotic spindle by maintaining them in a closed conformation characterized by the presence of an electron-dense cap. Regulates G2/M transition and spindle assembly during oocyte meiosis. Mediates histone modifications and transcriptional regulation in germinal vesicle oocytes which are required for meiotic progression. Also regulates microtubule nucleation and spindle assembly by activating aurora kinases during oocyte meiosis. Contributes to the establishment of centriolar satellites and also plays a role in primary cilium formation by recruiting TTBK2 to the mother centriole which is necessary for removal of the CP110 cap from the mother centriole, an early step in ciliogenesis. Required for epiblast development during early embryogenesis. Essential for cell viability. The sequence is that of Microspherule protein 1 (MCRS1) from Homo sapiens (Human).